Reading from the N-terminus, the 270-residue chain is PspA protein (270 aa).

Positions Met-238–Gln-270 are disordered. The segment covering Gly-240–Thr-258 has biased composition (low complexity).

This sequence belongs to the PspA/Vipp/IM30 family.

The protein resides in the cytoplasm. Involved in resistance to stress. Associates with and regulates lipid droplets (LDs) homeostasis under conditions of stress and may regulate non-replicating persistence (NRP). Could be involved in preservation of envelope integrity and tolerance to surface stress. The chain is PspA protein from Mycobacterium tuberculosis (strain ATCC 25177 / H37Ra).